We begin with the raw amino-acid sequence, 683 residues long: Probable potassium transport system protein Kup 1 (683 aa).

12 helical membrane passes run 13 to 33 (GLLI…LYVM), 55 to 75 (ISLV…FIAL), 98 to 118 (WLVL…TLTP), 139 to 159 (VPVS…LLLF), 168 to 188 (IIGK…GVIG), 218 to 238 (AGIF…ALYS), 251 to 271 (SWPY…VWIL), 296 to 316 (LAAI…LITG), 345 to 365 (IYIP…VLFF), 376 to 396 (GLSI…WLAM), 401 to 421 (TIWN…FMLA), and 426 to 446 (FMHG…IMYV).

This sequence belongs to the HAK/KUP transporter (TC 2.A.72) family.

It localises to the cell membrane. It carries out the reaction K(+)(in) + H(+)(in) = K(+)(out) + H(+)(out). Its function is as follows. Transport of potassium into the cell. Likely operates as a K(+):H(+) symporter. The polypeptide is Probable potassium transport system protein Kup 1 (Lactobacillus johnsonii (strain CNCM I-12250 / La1 / NCC 533)).